Here is a 26-residue protein sequence, read N- to C-terminus: Halocyntin (26 aa).

Its function is as follows. Has strong antibacterial activity against the Gram-positive bacteria M.luteus, S.aureus, B.megaterium, A.viridans and E.faecalis, and against the Gram-negative bacterium K.pneumoniae. Has less potent antibacterial activity against the Gram-negative bacteria E.coli DH5alpha, S.typhimurium, P.aeruginosa, E.aerogenes and N.gonorrhoeae. Has moderate hemolytic activity against sheep erythrocytes. This chain is Halocyntin, found in Halocynthia papillosa (Red sea-squirt).